The chain runs to 327 residues: Malate dehydrogenase (327 aa).

11-17 (GAAGNIS) contributes to the NAD(+) binding site. Arg-92 and Arg-98 together coordinate substrate. NAD(+) is bound by residues Asn-105, Gln-112, and 129 to 131 (VGN). 2 residues coordinate substrate: Asn-131 and Arg-162. Catalysis depends on His-187, which acts as the Proton acceptor. The segment at 304–327 (SQEKMKATEQELSEERDAVEHLLP) is disordered.

The protein belongs to the LDH/MDH superfamily. MDH type 2 family.

The catalysed reaction is (S)-malate + NAD(+) = oxaloacetate + NADH + H(+). In terms of biological role, catalyzes the reversible oxidation of malate to oxaloacetate. The chain is Malate dehydrogenase from Psychrobacter sp. (strain PRwf-1).